Here is a 153-residue protein sequence, read N- to C-terminus: Putative pre-16S rRNA nuclease (153 aa).

Belongs to the YqgF nuclease family.

Its subcellular location is the cytoplasm. Could be a nuclease involved in processing of the 5'-end of pre-16S rRNA. This is Putative pre-16S rRNA nuclease from Prochlorococcus marinus (strain MIT 9301).